A 234-amino-acid polypeptide reads, in one-letter code: 1-(5-phosphoribosyl)-5-[(5-phosphoribosylamino)methylideneamino] imidazole-4-carboxamide isomerase (234 aa).

Catalysis depends on Asp-9, which acts as the Proton acceptor. Asp-131 functions as the Proton donor in the catalytic mechanism.

This sequence belongs to the HisA/HisF family.

Its subcellular location is the cytoplasm. It catalyses the reaction 1-(5-phospho-beta-D-ribosyl)-5-[(5-phospho-beta-D-ribosylamino)methylideneamino]imidazole-4-carboxamide = 5-[(5-phospho-1-deoxy-D-ribulos-1-ylimino)methylamino]-1-(5-phospho-beta-D-ribosyl)imidazole-4-carboxamide. Its pathway is amino-acid biosynthesis; L-histidine biosynthesis; L-histidine from 5-phospho-alpha-D-ribose 1-diphosphate: step 4/9. The sequence is that of 1-(5-phosphoribosyl)-5-[(5-phosphoribosylamino)methylideneamino] imidazole-4-carboxamide isomerase from Staphylococcus aureus (strain MRSA252).